The chain runs to 212 residues: Probable nicotinate-nucleotide adenylyltransferase (212 aa).

This sequence belongs to the NadD family.

It carries out the reaction nicotinate beta-D-ribonucleotide + ATP + H(+) = deamido-NAD(+) + diphosphate. The protein operates within cofactor biosynthesis; NAD(+) biosynthesis; deamido-NAD(+) from nicotinate D-ribonucleotide: step 1/1. Functionally, catalyzes the reversible adenylation of nicotinate mononucleotide (NaMN) to nicotinic acid adenine dinucleotide (NaAD). This chain is Probable nicotinate-nucleotide adenylyltransferase, found in Mycobacterium avium (strain 104).